The following is a 216-amino-acid chain: Large ribosomal subunit protein uL4 (216 aa).

A disordered region spans residues 51–78 (KGRSEVHGSNTKPYKQKGTGRARRGDKK). Over residues 64 to 76 (YKQKGTGRARRGD) the composition is skewed to basic residues.

The protein belongs to the universal ribosomal protein uL4 family. In terms of assembly, part of the 50S ribosomal subunit.

In terms of biological role, one of the primary rRNA binding proteins, this protein initially binds near the 5'-end of the 23S rRNA. It is important during the early stages of 50S assembly. It makes multiple contacts with different domains of the 23S rRNA in the assembled 50S subunit and ribosome. Forms part of the polypeptide exit tunnel. This is Large ribosomal subunit protein uL4 from Treponema pallidum (strain Nichols).